We begin with the raw amino-acid sequence, 953 residues long: Ubiquitin carboxyl-terminal hydrolase CYLD (953 aa).

Residues 106-590 (CEERLSLFRN…LEIMIGKKKG (485 aa)) form an interaction with TRIP region. 2 consecutive CAP-Gly domains span residues 153 to 198 (LAER…VFVA) and 253 to 286 (DVLP…VQLC). The disordered stretch occupies residues 318 to 350 (FMSRGVGDKGSSSHNKPKVTGSTSDPGSRNRSE). The segment covering 327-346 (GSSSHNKPKVTGSTSDPGSR) has biased composition (polar residues). The residue at position 384 (Ser-384) is a Phosphoserine. The segment at 387-410 (EMSSDFGHSSPPPQPPSMNSLSSE) is disordered. The interval 391–466 (DFGHSSPPPQ…MPSSSGNAHG (76 aa)) is interaction with TRAF2. Residues Ser-415 and Ser-419 each carry the phosphoserine modification. Positions 467–681 (LEVGSLAEVK…FTSEEKDPEE (215 aa)) are interaction with IKBKG/NEMO. The CAP-Gly 3 domain occupies 489–532 (GQPPGLSDVLAGLELEDECAGCTDGTFRGTRYFTCALKKALFVK). In terms of domain architecture, USP spans 589–947 (KGIQGHYNSC…DAYMCMYQSP (359 aa)). Cys-598 (nucleophile) is an active-site residue. The tract at residues 778–830 (LEDTPRQCRICGGLAMYECRECYDDPDISAGKIKQFCKTCSTQVHLHPRRLNH) is B-box. Residues Cys-785, Cys-788, Cys-796, Cys-799, Cys-814, Cys-817, His-822, and His-830 each contribute to the Zn(2+) site. His-868 functions as the Proton acceptor in the catalytic mechanism.

It belongs to the peptidase C19 family. As to quaternary structure, interacts (via CAP-Gly domain) with IKBKG/NEMO (via proline-rich C-terminal region). Interacts with TRAF2 and TRIP. Interacts with PLK1, DVL1, DVL3, MAVS, TBK1, IKKE and RIGI. Interacts (via CAP-Gly domain) with microtubules. Interacts with HDAC6 and BCL3. Interacts with MAP3K7. Identified in a complex with TRAF6 and SQSTM1. Interacts with OPTN and SQSTM1. Interacts with CEP350. Interacts with RNF31; the interaction is indirect and is mediated via SPATA2. Interacts with SPATA2 (via the PUB domain); the interaction is direct and recruits CYLD to the LUBAC complex, thereby regulating TNF-alpha-induced necroptosis. Post-translationally, phosphorylated on several serine residues by IKKA and/or IKKB in response to immune stimuli. Phosphorylation requires IKBKG. Phosphorylation abolishes TRAF2 deubiquitination, interferes with the activation of Jun kinases, and strongly reduces CD40-dependent gene activation by NF-kappa-B. In terms of processing, ubiquitinated. Polyubiquitinated in hepatocytes treated with palmitic acid. Ubiquitination is mediated by E3 ligase TRIM47 and leads to proteasomal degradation.

The protein localises to the cytoplasm. It is found in the perinuclear region. Its subcellular location is the cytoskeleton. The protein resides in the cell membrane. It localises to the microtubule organizing center. The protein localises to the centrosome. It is found in the spindle. Its subcellular location is the cilium basal body. It catalyses the reaction Thiol-dependent hydrolysis of ester, thioester, amide, peptide and isopeptide bonds formed by the C-terminal Gly of ubiquitin (a 76-residue protein attached to proteins as an intracellular targeting signal).. Its function is as follows. Deubiquitinase that specifically cleaves 'Lys-63'- and linear 'Met-1'-linked polyubiquitin chains and is involved in NF-kappa-B activation and TNF-alpha-induced necroptosis. Negatively regulates NF-kappa-B activation by deubiquitinating upstream signaling factors. Contributes to the regulation of cell survival, proliferation and differentiation via its effects on NF-kappa-B activation. Negative regulator of Wnt signaling. Inhibits HDAC6 and thereby promotes acetylation of alpha-tubulin and stabilization of microtubules. Plays a role in the regulation of microtubule dynamics, and thereby contributes to the regulation of cell proliferation, cell polarization, cell migration, and angiogenesis. Required for normal cell cycle progress and normal cytokinesis. Inhibits nuclear translocation of NF-kappa-B. Plays a role in the regulation of inflammation and the innate immune response, via its effects on NF-kappa-B activation. Dispensable for the maturation of intrathymic natural killer cells, but required for the continued survival of immature natural killer cells. Negatively regulates TNFRSF11A signaling and osteoclastogenesis. Involved in the regulation of ciliogenesis, allowing ciliary basal bodies to migrate and dock to the plasma membrane; this process does not depend on NF-kappa-B activation. Ability to remove linear ('Met-1'-linked) polyubiquitin chains regulates innate immunity and TNF-alpha-induced necroptosis: recruited to the LUBAC complex via interaction with SPATA2 and restricts linear polyubiquitin formation on target proteins. Regulates innate immunity by restricting linear polyubiquitin formation on RIPK2 in response to NOD2 stimulation. Involved in TNF-alpha-induced necroptosis by removing linear ('Met-1'-linked) polyubiquitin chains from RIPK1, thereby regulating the kinase activity of RIPK1. Negatively regulates intestinal inflammation by removing 'Lys-63' linked polyubiquitin chain of NLRP6, thereby reducing the interaction between NLRP6 and PYCARD/ASC and formation of the NLRP6 inflammasome. Does not catalyze deubiquitination of heterotypic 'Lys-63'-/'Lys-48'-linked branched ubiquitin chains. Removes 'Lys-63' linked polyubiquitin chain of MAP3K7, which inhibits phosphorylation and blocks downstream activation of the JNK-p38 kinase cascades. Also removes 'Lys-63'-linked polyubiquitin chains of MAP3K1 and MA3P3K3, which inhibit their interaction with MAP2K1 and MAP2K2. In Rattus norvegicus (Rat), this protein is Ubiquitin carboxyl-terminal hydrolase CYLD (Cyld).